A 408-amino-acid chain; its full sequence is E3 ubiquitin-protein ligase At1g12760 (408 aa).

Residues Met-1 to Arg-52 form a disordered region. The segment covering Ser-10–Gly-34 has biased composition (low complexity). Helical transmembrane passes span Val-100–Val-120 and Val-133–Tyr-153. The tract at residues Arg-160–Ser-195 is disordered. The segment covering Arg-163 to Ser-183 has biased composition (low complexity). Helical transmembrane passes span Ala-219–Gly-239, Ile-254–Ile-274, and Gly-275–Gln-295. The segment at Cys-353–Lys-394 adopts an RING-type; atypical zinc-finger fold.

The protein localises to the membrane. The enzyme catalyses S-ubiquitinyl-[E2 ubiquitin-conjugating enzyme]-L-cysteine + [acceptor protein]-L-lysine = [E2 ubiquitin-conjugating enzyme]-L-cysteine + N(6)-ubiquitinyl-[acceptor protein]-L-lysine.. The protein operates within protein modification; protein ubiquitination. In terms of biological role, mediates E2-dependent protein ubiquitination in vitro. The sequence is that of E3 ubiquitin-protein ligase At1g12760 from Arabidopsis thaliana (Mouse-ear cress).